A 1382-amino-acid polypeptide reads, in one-letter code: DNA-directed RNA polymerase subunit beta' (1382 aa).

The Zn(2+) site is built by C70, C72, C85, and C88. Residues D460, D462, and D464 each coordinate Mg(2+). Zn(2+) contacts are provided by C808, C882, C889, and C892.

The protein belongs to the RNA polymerase beta' chain family. In terms of assembly, the RNAP catalytic core consists of 2 alpha, 1 beta, 1 beta' and 1 omega subunit. When a sigma factor is associated with the core the holoenzyme is formed, which can initiate transcription. Requires Mg(2+) as cofactor. Zn(2+) is required as a cofactor.

The catalysed reaction is RNA(n) + a ribonucleoside 5'-triphosphate = RNA(n+1) + diphosphate. DNA-dependent RNA polymerase catalyzes the transcription of DNA into RNA using the four ribonucleoside triphosphates as substrates. This is DNA-directed RNA polymerase subunit beta' from Geobacter sp. (strain M21).